Reading from the N-terminus, the 638-residue chain is Neuroendocrine convertase 2 (638 aa).

Positions 1–25 are cleaved as a signal peptide; that stretch reads MKGGCVSQWKAAAGFLFCVMVFASA. Residues 26 to 109 constitute a propeptide that is removed on maturation; that stretch reads ERPVFTNHFL…QQEGFDRKKR (84 aa). One can recognise a Peptidase S8 domain in the interval 129-453; the sequence is QWYLINTGQA…YGVLDAGAMV (325 aa). Catalysis depends on charge relay system residues Asp167 and His208. 2 disulfides stabilise this stretch: Cys225/Cys376 and Cys317/Cys347. N-linked (GlcNAc...) asparagine glycosylation is present at Asn375. Ser384 functions as the Charge relay system in the catalytic mechanism. The P/Homo B domain maps to 461–597; that stretch reads TVPERFHCVG…TLMLHGTQSA (137 aa). Residues Cys468 and Cys494 are joined by a disulfide bond. Residues Asn514 and Asn524 are each glycosylated (N-linked (GlcNAc...) asparagine).

This sequence belongs to the peptidase S8 family. Furin subfamily.

The protein resides in the cytoplasmic vesicle. Its subcellular location is the secretory vesicle. The protein localises to the secreted. It catalyses the reaction Release of protein hormones and neuropeptides from their precursors, generally by hydrolysis of -Lys-Arg-|- bonds.. Its function is as follows. Serine endopeptidase which is involved in the processing of hormone and other protein precursors at sites comprised of pairs of basic amino acid residues. Responsible for the release of glucagon from proglucagon in pancreatic A cells. The protein is Neuroendocrine convertase 2 (PCSK2) of Pongo abelii (Sumatran orangutan).